We begin with the raw amino-acid sequence, 440 residues long: Protein eva-1 homolog C (440 aa).

Residues 1–13 are compositionally biased toward pro residues; sequence MLLPGHPRPPPAP. The segment at 1 to 23 is disordered; that stretch reads MLLPGHPRPPPAPQSAQNQGLRR. The N-terminal stretch at 1-48 is a signal peptide; it reads MLLPGHPRPPPAPQSAQNQGLRRQVEPPGQLLRLFYCTVLVCSKETSA. The Extracellular portion of the chain corresponds to 49–321; it reads LTDFSGYLTK…AYIRAHPERA (273 aa). N-linked (GlcNAc...) asparagine glycosylation is found at N62, N109, and N165. The 93-residue stretch at 67–159 folds into the SUEL-type lectin 1 domain; that stretch reads ACDGDYLNLQ…KYLLVSFKCQ (93 aa). One can recognise an SUEL-type lectin 2 domain in the interval 168–260; sequence VCENQELKLH…KYLTVAYACV (93 aa). The chain crosses the membrane as a helical span at residues 322–342; it reads ALLFMSSVCIGLLLTLCALVI. Topologically, residues 343 to 440 are cytoplasmic; it reads RVSCTKDFRE…SLPRNVGHFY (98 aa). The segment at 364–384 is disordered; it reads SDKAEEDSEEDLEEEDSSDSQ. The span at 367 to 381 shows a compositional bias: acidic residues; sequence AEEDSEEDLEEEDSS.

It belongs to the EVA1 family. In terms of tissue distribution, ubiquitous.

It localises to the cell membrane. Functionally, binds heparin. The protein is Protein eva-1 homolog C (Eva1c) of Mus musculus (Mouse).